The following is a 582-amino-acid chain: ATP-dependent lipid A-core flippase (582 aa).

5 consecutive transmembrane segments (helical) span residues 16-36 (LWPT…ALIL), 63-83 (VLVW…ITSY), 153-173 (IIGL…ILIV), 253-273 (PIIQ…ASFP), and 275-295 (VMDN…IALM). The 283-residue stretch at 28–310 (IVAGVALILN…LTNVNAQFQR (283 aa)) folds into the ABC transmembrane type-1 domain. The 237-residue stretch at 342 to 578 (VEFRNVTFTY…RGVYAQLHKM (237 aa)) folds into the ABC transporter domain. ATP is bound at residue 376 to 383 (GRSGSGKS).

Belongs to the ABC transporter superfamily. Lipid exporter (TC 3.A.1.106) family. Homodimer.

It localises to the cell inner membrane. It carries out the reaction ATP + H2O + lipid A-core oligosaccharideSide 1 = ADP + phosphate + lipid A-core oligosaccharideSide 2.. Its function is as follows. Involved in lipopolysaccharide (LPS) biosynthesis. Translocates lipid A-core from the inner to the outer leaflet of the inner membrane. Transmembrane domains (TMD) form a pore in the inner membrane and the ATP-binding domain (NBD) is responsible for energy generation. The polypeptide is ATP-dependent lipid A-core flippase (Shigella sonnei (strain Ss046)).